The sequence spans 320 residues: Nicotianamine synthase 2 (320 aa).

The protein belongs to the nicotianamine synthase (NAS)-like family.

It catalyses the reaction 3 S-adenosyl-L-methionine = nicotianamine + 3 S-methyl-5'-thioadenosine + 3 H(+). Its function is as follows. Synthesizes nicotianamine, a polyamine which serves as a sensor for the physiological iron status within the plant, and/or might be involved in the transport of iron. This Arabidopsis thaliana (Mouse-ear cress) protein is Nicotianamine synthase 2 (NAS2).